The sequence spans 171 residues: ATP synthase subunit b (171 aa).

A helical transmembrane segment spans residues 31-51 (FFVVLAIFLVVLAVIGTFVVP).

This sequence belongs to the ATPase B chain family. As to quaternary structure, F-type ATPases have 2 components, F(1) - the catalytic core - and F(0) - the membrane proton channel. F(1) has five subunits: alpha(3), beta(3), gamma(1), delta(1), epsilon(1). F(0) has three main subunits: a(1), b(2) and c(10-14). The alpha and beta chains form an alternating ring which encloses part of the gamma chain. F(1) is attached to F(0) by a central stalk formed by the gamma and epsilon chains, while a peripheral stalk is formed by the delta and b chains.

It localises to the cell membrane. F(1)F(0) ATP synthase produces ATP from ADP in the presence of a proton or sodium gradient. F-type ATPases consist of two structural domains, F(1) containing the extramembraneous catalytic core and F(0) containing the membrane proton channel, linked together by a central stalk and a peripheral stalk. During catalysis, ATP synthesis in the catalytic domain of F(1) is coupled via a rotary mechanism of the central stalk subunits to proton translocation. Functionally, component of the F(0) channel, it forms part of the peripheral stalk, linking F(1) to F(0). This Mycobacterium bovis (strain ATCC BAA-935 / AF2122/97) protein is ATP synthase subunit b.